A 550-amino-acid polypeptide reads, in one-letter code: Phospholipase B-like 1 (550 aa).

Positions 1 to 39 (MCHRSHGRSLRPPSPLLLLLPLLLQSPWAAGAAEKHNSA) are cleaved as a signal peptide. A glycan (N-linked (GlcNAc...) (high mannose) asparagine; alternate) is linked at asparagine 72. Asparagine 72 carries N-linked (GlcNAc...) (hybrid) asparagine; alternate glycosylation. Residues 210–228 (LSPTKSSSLKKFKIWEMGH) constitute a propeptide, removed in mature form. Residues asparagine 309 and asparagine 412 are each glycosylated (N-linked (GlcNAc...) (high mannose) asparagine; alternate). Asparagine 309 and asparagine 412 each carry an N-linked (GlcNAc...) (hybrid) asparagine; alternate glycan. Disulfide bonds link cysteine 471/cysteine 476 and cysteine 475/cysteine 490. An N-linked (GlcNAc...) (high mannose) asparagine; alternate glycan is attached at asparagine 527. Asparagine 527 carries an N-linked (GlcNAc...) (hybrid) asparagine; alternate glycan.

Belongs to the phospholipase B-like family. In terms of assembly, may form a homodimer, each monomer is composed of a chain A and a chain B. In terms of processing, the maturation cleavages that produces chains A and B are required to open the putative substrate binding pocket. Both chains A and B remain associated in the mature protein.

It localises to the lysosome. Functionally, exhibits weak phospholipase activity, acting on various phospholipids, including phosphatidylcholine, phosphatidylinositol, phosphatidylethanolamine and lysophospholipids. However, in view of the small size of the putative binding pocket, it has been proposed that it may act rather as an amidase or a peptidase. The sequence is that of Phospholipase B-like 1 (Plbd1) from Rattus norvegicus (Rat).